Here is a 435-residue protein sequence, read N- to C-terminus: D-amino acid dehydrogenase (435 aa).

An FAD-binding site is contributed by 3–17 (VLILGSGVIGTTSAW).

Belongs to the DadA oxidoreductase family. The cofactor is FAD.

It carries out the reaction a D-alpha-amino acid + A + H2O = a 2-oxocarboxylate + AH2 + NH4(+). It functions in the pathway amino-acid degradation; D-alanine degradation; NH(3) and pyruvate from D-alanine: step 1/1. Oxidative deamination of D-amino acids. This is D-amino acid dehydrogenase from Xylella fastidiosa (strain M12).